Here is a 141-residue protein sequence, read N- to C-terminus: Transcription antitermination protein NusB (141 aa).

This sequence belongs to the NusB family.

Its function is as follows. Involved in transcription antitermination. Required for transcription of ribosomal RNA (rRNA) genes. Binds specifically to the boxA antiterminator sequence of the ribosomal RNA (rrn) operons. This chain is Transcription antitermination protein NusB, found in Treponema pallidum (strain Nichols).